We begin with the raw amino-acid sequence, 565 residues long: Oxygen-dependent choline dehydrogenase (565 aa).

Residue 7–36 (DYIICGAGSAGNVLATRLTEDPGVTVLLLE) coordinates FAD. Residue His474 is the Proton acceptor of the active site.

Belongs to the GMC oxidoreductase family. The cofactor is FAD.

It catalyses the reaction choline + A = betaine aldehyde + AH2. It carries out the reaction betaine aldehyde + NAD(+) + H2O = glycine betaine + NADH + 2 H(+). It functions in the pathway amine and polyamine biosynthesis; betaine biosynthesis via choline pathway; betaine aldehyde from choline (cytochrome c reductase route): step 1/1. Involved in the biosynthesis of the osmoprotectant glycine betaine. Catalyzes the oxidation of choline to betaine aldehyde and betaine aldehyde to glycine betaine at the same rate. The protein is Oxygen-dependent choline dehydrogenase of Burkholderia pseudomallei (strain 1710b).